A 161-amino-acid chain; its full sequence is Regulator of ribonuclease activity A (161 aa).

The protein belongs to the RraA family. In terms of assembly, homotrimer. Binds to both RNA-binding sites in the C-terminal region of Rne and to RhlB.

It is found in the cytoplasm. Globally modulates RNA abundance by binding to RNase E (Rne) and regulating its endonucleolytic activity. Can modulate Rne action in a substrate-dependent manner by altering the composition of the degradosome. Modulates RNA-binding and helicase activities of the degradosome. The chain is Regulator of ribonuclease activity A from Salmonella agona (strain SL483).